Reading from the N-terminus, the 63-residue chain is Conotoxin Cal12.5 (63 aa).

The first 21 residues, 1 to 21, serve as a signal peptide directing secretion; it reads MKVTCVLVVLLLLLPYGDLLG.

The protein belongs to the conotoxin O1 superfamily. Contains 4 disulfide bonds. Expressed by the venom duct.

It is found in the secreted. In terms of biological role, probable neurotoxin. The sequence is that of Conotoxin Cal12.5 from Californiconus californicus (California cone).